The sequence spans 983 residues: Next to BRCA1 gene 1 protein (983 aa).

A PB1 domain is found at 4-86; sequence QVTLNVTFKN…NQLQMQVHEG (83 aa). Phosphoserine is present on S117. A disordered region spans residues 126–149; that stretch reads MKTTEEPTAEARSPVPCDTDKPQD. Residues 214–266 form a ZZ-type zinc finger; sequence SWHIACSHCQKRIVGVRYQCSLCPSYNICEDCEAGPYSHDTNHILLKFRRPVV. C219, C222, C233, C236, C242, C245, H252, and H256 together coordinate Zn(2+). ATG8 family proteins-binding stretches follow at residues 544-638 and 745-756; these read ASER…PASV and ASSEDYIIILPE. Phosphothreonine is present on T588. S592 and S598 each carry phosphoserine. Positions 611-645 are disordered; the sequence is EESEGAGLKASPDSTVLTKRKAETPASVEETEEDL. The disordered stretch occupies residues 768–813; the sequence is MYSSALSQPGLERGAEGEPGIESGQEPAEARERLPERESQPKEQSI. Positions 795-808 are enriched in basic and acidic residues; the sequence is AEARERLPERESQP. S855 carries the phosphoserine modification. A disordered region spans residues 867–894; it reads DHVRGEPRGSTGLANSRQKSCDHSRHHN. Positions 930–974 constitute a UBA domain; the sequence is SEDQTAALMAHLFEMGFCDRQLNLRLLRKHNHNILQVVTELLQVN.

Homooligomer and heterooligomer. Interacts with TRIM55. Interacts with titin/TTN. Interacts with RNF29, USP8, MAP1LC3A, MAP1LC3B, MAP1LC3C, GABARAP, GABARAPL1 and GABARAPL2. Binds to ubiquitin and ubiquitinated proteins. Interacts with SQSTM1. Interacts with TAX1BP1. Interacts with IRF3; this interaction mediates autophagic degradation of IRF3. Interacts with IL12A and IL12B. Phosphorylated by GSK3A; this phosphorylation inhibits NBR1 involvement in the formation of ubiquitinated protein aggregates.

The protein localises to the cytoplasm. The protein resides in the cytoplasmic vesicle. Its subcellular location is the autophagosome. It is found in the lysosome. It localises to the myofibril. The protein localises to the sarcomere. The protein resides in the m line. Functionally, ubiquitin-binding autophagy adapter that participates in different processes including host defense or intracellular homeostasis. Possesses a double function during the selective autophagy by acting as a shuttle bringing ubiquitinated proteins to autophagosomes and also by participating in the formation of protein aggregates. Plays a role in the regulation of the innate immune response by modulating type I interferon production and targeting ubiquitinated IRF3 for autophagic degradation. In response to oxidative stress, promotes an increase in SQSTM1 levels, phosphorylation, and body formation by preventing its autophagic degradation. In turn, activates the KEAP1-NRF2/NFE2L2 antioxidant pathway. Also plays non-autophagy role by mediating the shuttle of IL-12 to late endosome for subsequent secretion. The protein is Next to BRCA1 gene 1 protein (Nbr1) of Rattus norvegicus (Rat).